The following is a 393-amino-acid chain: S-adenosylmethionine synthase 1 (393 aa).

Mg(2+) is bound at residue Glu9. His15 serves as a coordination point for ATP. Glu43 is a binding site for K(+). L-methionine contacts are provided by Glu56 and Gln99. ATP contacts are provided by residues 167–169, 235–238, Asp246, 252–253, Ala269, Lys273, and Lys277; these read DGK, SGRF, and RK. Asp246 serves as a coordination point for L-methionine. Lys277 is an L-methionine binding site.

This sequence belongs to the AdoMet synthase family. As to quaternary structure, homotetramer. The cofactor is Mn(2+). Requires Mg(2+) as cofactor. Co(2+) is required as a cofactor. It depends on K(+) as a cofactor.

It localises to the cytoplasm. It carries out the reaction L-methionine + ATP + H2O = S-adenosyl-L-methionine + phosphate + diphosphate. The protein operates within amino-acid biosynthesis; S-adenosyl-L-methionine biosynthesis; S-adenosyl-L-methionine from L-methionine: step 1/1. Catalyzes the formation of S-adenosylmethionine from methionine and ATP. The reaction comprises two steps that are both catalyzed by the same enzyme: formation of S-adenosylmethionine (AdoMet) and triphosphate, and subsequent hydrolysis of the triphosphate. This Picea sitchensis (Sitka spruce) protein is S-adenosylmethionine synthase 1 (METK1).